The sequence spans 565 residues: Sulfite reductase [NADPH] hemoprotein beta-component (565 aa).

Cys-429, Cys-435, Cys-474, and Cys-478 together coordinate [4Fe-4S] cluster. Cys-478 serves as a coordination point for siroheme.

The protein belongs to the nitrite and sulfite reductase 4Fe-4S domain family. In terms of assembly, alpha(8)-beta(8). The alpha component is a flavoprotein, the beta component is a hemoprotein. Siroheme is required as a cofactor. The cofactor is [4Fe-4S] cluster.

The enzyme catalyses hydrogen sulfide + 3 NADP(+) + 3 H2O = sulfite + 3 NADPH + 4 H(+). Its pathway is sulfur metabolism; hydrogen sulfide biosynthesis; hydrogen sulfide from sulfite (NADPH route): step 1/1. Its function is as follows. Component of the sulfite reductase complex that catalyzes the 6-electron reduction of sulfite to sulfide. This is one of several activities required for the biosynthesis of L-cysteine from sulfate. The sequence is that of Sulfite reductase [NADPH] hemoprotein beta-component from Shewanella baltica (strain OS223).